The following is a 737-amino-acid chain: DNA mismatch repair protein MLH1 (737 aa).

Disordered regions lie at residues 1–21 (MIDD…ATTI) and 378–416 (TLTS…PAGR). Residues 378–400 (TLTSQKSDSPVSQKPSGQKTQKV) are compositionally biased toward polar residues.

Belongs to the DNA mismatch repair MutL/HexB family. In terms of assembly, heterodimer of MLH1 and PMS1, called MutLalpha, which is the major MMR MutL activity correcting base-base mismatches as well as IDLs. The heterodimer binds double strand DNA independently of a mismatch with positive cooperativity and has more than one DNA binding site. Heterodimer of MLH1 and MLH3, called MutLbeta, which is involved in correction of a specific subset of IDLs when associated with MutSbeta. As to expression, ubiquitous.

The protein resides in the nucleus. Its function is as follows. Involved in DNA mismatch repair (MMR), correcting insertion-deletion loops (IDLs) resulting from DNA replication, DNA damage or from recombination events between non-identical sequences during meiosis. Component of the MutLbeta heterodimer, which probably forms a ternary complex with the MutSbeta heterodimer that initially recognizes the DNA mismatches. This complex is thought to be responsible for directing the downstream MMR events, including strand discrimination, excision, and resynthesis. Plays a major role in promoting meiotic crossing-over and is involved in maintaining the genetic stability of simple sequence repeats by correction of frameshift intermediates. In Arabidopsis thaliana (Mouse-ear cress), this protein is DNA mismatch repair protein MLH1 (MLH1).